Reading from the N-terminus, the 421-residue chain is Probable cysteine desulfurase (421 aa).

An N6-(pyridoxal phosphate)lysine modification is found at Lys-242.

This sequence belongs to the class-V pyridoxal-phosphate-dependent aminotransferase family. Csd subfamily. Pyridoxal 5'-phosphate serves as cofactor.

It carries out the reaction (sulfur carrier)-H + L-cysteine = (sulfur carrier)-SH + L-alanine. Catalyzes the removal of elemental sulfur and selenium atoms from L-cysteine, L-cystine, L-selenocysteine, and L-selenocystine to produce L-alanine. The chain is Probable cysteine desulfurase (csd) from Pasteurella multocida (strain Pm70).